The chain runs to 307 residues: tRNA pseudouridine synthase B (307 aa).

Catalysis depends on Asp38, which acts as the Nucleophile.

It belongs to the pseudouridine synthase TruB family. Type 1 subfamily.

It carries out the reaction uridine(55) in tRNA = pseudouridine(55) in tRNA. In terms of biological role, responsible for synthesis of pseudouridine from uracil-55 in the psi GC loop of transfer RNAs. This Bacillus thuringiensis (strain Al Hakam) protein is tRNA pseudouridine synthase B.